The sequence spans 588 residues: Aspartate--tRNA ligase (588 aa).

Residue Glu-174 participates in L-aspartate binding. Residues 198 to 201 are aspartate; it reads QLFK. Arg-220 provides a ligand contact to L-aspartate. Residues 220 to 222 and Gln-229 contribute to the ATP site; that span reads RDE. His-448 is a binding site for L-aspartate. Glu-482 provides a ligand contact to ATP. Arg-489 serves as a coordination point for L-aspartate. Position 534-537 (534-537) interacts with ATP; it reads GIDR.

The protein belongs to the class-II aminoacyl-tRNA synthetase family. Type 1 subfamily. In terms of assembly, homodimer.

The protein localises to the cytoplasm. It carries out the reaction tRNA(Asp) + L-aspartate + ATP = L-aspartyl-tRNA(Asp) + AMP + diphosphate. Its function is as follows. Catalyzes the attachment of L-aspartate to tRNA(Asp) in a two-step reaction: L-aspartate is first activated by ATP to form Asp-AMP and then transferred to the acceptor end of tRNA(Asp). The chain is Aspartate--tRNA ligase from Xanthomonas campestris pv. campestris (strain B100).